We begin with the raw amino-acid sequence, 138 residues long: uncharacterized protein (138 aa).

This is an uncharacterized protein from Schizosaccharomyces pombe (strain 972 / ATCC 24843) (Fission yeast).